Here is a 37-residue protein sequence, read N- to C-terminus: Photosystem II reaction center protein M (37 aa).

Residues 7–27 form a helical membrane-spanning segment; it reads AFIAVLLFLAVPTAFLLIPYV.

It belongs to the PsbM family. As to quaternary structure, PSII is composed of 1 copy each of membrane proteins PsbA, PsbB, PsbC, PsbD, PsbE, PsbF, PsbH, PsbI, PsbJ, PsbK, PsbL, PsbM, PsbT, PsbX, PsbY, PsbZ, Psb30/Ycf12, at least 3 peripheral proteins of the oxygen-evolving complex and a large number of cofactors. It forms dimeric complexes.

It is found in the plastid. The protein resides in the chloroplast thylakoid membrane. In terms of biological role, one of the components of the core complex of photosystem II (PSII). PSII is a light-driven water:plastoquinone oxidoreductase that uses light energy to abstract electrons from H(2)O, generating O(2) and a proton gradient subsequently used for ATP formation. It consists of a core antenna complex that captures photons, and an electron transfer chain that converts photonic excitation into a charge separation. This subunit is found at the monomer-monomer interface. In Pinus thunbergii (Japanese black pine), this protein is Photosystem II reaction center protein M.